The sequence spans 210 residues: Redox-sensing transcriptional repressor Rex (210 aa).

The H-T-H motif DNA-binding region spans 17-56; it reads KYHRYLNELMKNDVDRISSKELGEKIGFTASQIRQDLNCF. Position 91–96 (91–96) interacts with NAD(+); that stretch reads GAGNIG.

Belongs to the transcriptional regulatory Rex family. As to quaternary structure, homodimer.

The protein localises to the cytoplasm. Modulates transcription in response to changes in cellular NADH/NAD(+) redox state. This Clostridium botulinum (strain Eklund 17B / Type B) protein is Redox-sensing transcriptional repressor Rex.